The primary structure comprises 607 residues: Arginine--tRNA ligase, cytoplasmic (607 aa).

A2 is subject to N-acetylalanine. Residue S15 is modified to Phosphoserine. Interaction with tRNA stretches follow at residues 59 to 60 (EW) and 106 to 111 (NGPFIQ). L-arginine contacts are provided by residues 148-153 (EFSSPN), H162, Y347, D351, and Q375. Residues 151–162 (SPNIAKPFHAGH) carry the 'HIGH' region motif. Positions 484–498 (DTGPYLQYAHSRLRS) are interaction with tRNA.

It belongs to the class-I aminoacyl-tRNA synthetase family. Monomer.

The protein resides in the cytoplasm. It localises to the cytosol. The catalysed reaction is tRNA(Arg) + L-arginine + ATP = L-arginyl-tRNA(Arg) + AMP + diphosphate. Functionally, forms part of a macromolecular complex that catalyzes the attachment of specific amino acids to cognate tRNAs during protein synthesis. This Saccharomyces cerevisiae (strain ATCC 204508 / S288c) (Baker's yeast) protein is Arginine--tRNA ligase, cytoplasmic.